We begin with the raw amino-acid sequence, 20 residues long: Magnificalysin I (20 aa).

The segment at 1-10 (ALAGTIIAGA) is plays an important role in the hemolytic activity. The segment at 9-20 (GASLTFKILDEV) is N-terminal region.

This sequence belongs to the actinoporin family. Sea anemone subfamily. As to quaternary structure, octamer or nonamer in membranes. Monomer in the soluble state.

Its subcellular location is the secreted. It is found in the nematocyst. It localises to the target cell membrane. In terms of biological role, pore-forming protein that forms cations-selective hydrophilic pores of around 1 nm and causes cytolysis. Pore formation is a multi-step process that involves specific recognition of membrane sphingomyelin (but neither cholesterol nor phosphatidylcholine) using aromatic rich region and adjacent phosphocholine (POC) binding site, firm binding to the membrane (mainly driven by hydrophobic interactions) accompanied by the transfer of the N-terminal region to the lipid-water interface and finally pore formation after oligomerization of monomers. The polypeptide is Magnificalysin I (Heteractis magnifica (Magnificent sea anemone)).